A 492-amino-acid chain; its full sequence is Aspartate aminotransferase (492 aa).

The N-terminal 66 residues, methionine 1 to arginine 66, are a transit peptide targeting the chloroplast. Residues glycine 119, tryptophan 206, and asparagine 256 each coordinate L-aspartate. Lysine 319 is modified (N6-(pyridoxal phosphate)lysine). Arginine 458 is a binding site for L-aspartate.

This sequence belongs to the class-I pyridoxal-phosphate-dependent aminotransferase family. As to quaternary structure, homodimer. The cofactor is pyridoxal 5'-phosphate.

It localises to the plastid. Its subcellular location is the chloroplast. It carries out the reaction L-aspartate + 2-oxoglutarate = oxaloacetate + L-glutamate. Prokaryotic-type aspartate aminotransferase. Specific for aspartate and no activity with glutamine, asparagine, alanine, histidine, leucine, methionine, lysine, arginine, tryptophan, tyrosine, phenylalanine or kynurenine. The polypeptide is Aspartate aminotransferase (AAT) (Pinus pinaster (Maritime pine)).